The following is a 143-amino-acid chain: Transcriptional regulator MraZ (143 aa).

2 consecutive SpoVT-AbrB domains span residues 5–47 (EYNH…SSDE) and 76–119 (ASEC…SNVE).

It belongs to the MraZ family. In terms of assembly, forms oligomers.

The protein resides in the cytoplasm. Its subcellular location is the nucleoid. In Alkaliphilus oremlandii (strain OhILAs) (Clostridium oremlandii (strain OhILAs)), this protein is Transcriptional regulator MraZ.